The primary structure comprises 485 residues: Sodium-coupled neutral amino acid symporter 1 (485 aa).

At 1–74 (MMHFKSGLEL…EYIPGTTSLG (74 aa)) the chain is on the cytoplasmic side. Phosphoserine is present on S6. Phosphothreonine is present on T11. S25, S28, S49, and S52 each carry phosphoserine. Phosphothreonine is present on T54. A Phosphoserine modification is found at S56. The chain crosses the membrane as a helical span at residues 75–97 (MSVFNLSNAIMGSGILGLAFALA). Topologically, residues 98–112 (NTGILLFLILLTSVT) are extracellular. Residues 113–133 (LLSIYSINLLLICSKETGCMV) form a helical membrane-spanning segment. The Cytoplasmic portion of the chain corresponds to 134 to 148 (YEKLGEQVFGTTGKL). Residues 149-169 (VIFGATSLQNTGAMLSYLFIV) traverse the membrane as a helical segment. Residues 170 to 188 (KNELPSAIKSLMGEEDAFS) lie on the Extracellular side of the membrane. Residues 189-211 (AWYVDGRVLVVMVTFGIILPLCL) form a helical membrane-spanning segment. The Cytoplasmic segment spans residues 212–216 (LKNLG). Residues 217-237 (YLGYTSGFSLSCMMFFLIVVI) form a helical membrane-spanning segment. Residues 238–273 (YKKFQTPCMSVEQNSTVSANVTDACTPKYVTFNSKT) are Extracellular-facing. C245 and C262 are oxidised to a cystine. N251 and N257 each carry an N-linked (GlcNAc...) asparagine glycan. Residues 274-294 (VYALPTIAFAFVCHPSVLPIY) traverse the membrane as a helical segment. Topologically, residues 295–310 (SELKDRSQKKMQMVSN) are cytoplasmic. The chain crosses the membrane as a helical span at residues 311–331 (ISFFAMFVMYFLTAIFGYLTF). Residues 332–348 (YEKVQSDLLHKYQSTGD) lie on the Extracellular side of the membrane. The chain crosses the membrane as a helical span at residues 349–369 (ILILTVRLAVIVAVILTVPVL). Over 370–391 (FFTVRSSLFELAKKTKFHLCRH) the chain is Cytoplasmic. A helical transmembrane segment spans residues 392-412 (VLVTIILLIIINLLVIFIPSM). Residues 413 to 414 (KD) lie on the Extracellular side of the membrane. Residues 415–435 (IFGVVGVTSANMLIFILPSSL) traverse the membrane as a helical segment. Residues 436-450 (YLKITNQDGDKGTQR) are Cytoplasmic-facing. A helical membrane pass occupies residues 451–471 (IWAALFLGLGVLFSLISIPLV). Over 472–485 (IYDWACSSGTDEGH) the chain is Extracellular.

Belongs to the amino acid/polyamine transporter 2 family. Post-translationally, N-glycosylation plays an important role in the L-glutamine transport. As to expression, specifically expressed in brain and retina (at protein level). Also detected in spleen, small intestine and lung.

The protein localises to the cell membrane. It carries out the reaction L-glutamine(in) + Na(+)(in) = L-glutamine(out) + Na(+)(out). It catalyses the reaction L-alanine(in) + Na(+)(in) = L-alanine(out) + Na(+)(out). The enzyme catalyses L-histidine(in) + Na(+)(in) = L-histidine(out) + Na(+)(out). The catalysed reaction is L-asparagine(in) + Na(+)(in) = L-asparagine(out) + Na(+)(out). It carries out the reaction L-serine(in) + Na(+)(in) = L-serine(out) + Na(+)(out). It catalyses the reaction L-cysteine(in) + Na(+)(in) = L-cysteine(out) + Na(+)(out). The enzyme catalyses L-methionine(in) + Na(+)(in) = L-methionine(out) + Na(+)(out). The catalysed reaction is glycine(in) + Na(+)(in) = glycine(out) + Na(+)(out). It carries out the reaction L-threonine(in) + Na(+)(in) = L-threonine(out) + Na(+)(out). It catalyses the reaction L-proline(in) + Na(+)(in) = L-proline(out) + Na(+)(out). Its activity is regulated as follows. Inhibited by alpha-(methylamino)isobutyric acid (MeAIB). Inhibited by lithium, potassium, choline ions, N-methylglucamine. The pH dependence has an allosteric effect on the transport. Functionally, symporter that cotransports short-chain neutral amino acids and sodium ions from the extraccellular to the intracellular side of the cell membrane. The transport is elctrogenic, pH dependent and driven by the Na(+) electrochemical gradient. Participates in the astroglia-derived glutamine transport into GABAergic interneurons for neurotransmitter GABA de novo synthesis. May also contributes to amino acid transport in placental trophoblast. Regulates synaptic plasticity. This chain is Sodium-coupled neutral amino acid symporter 1, found in Mus musculus (Mouse).